The chain runs to 483 residues: Teichuronic acid biosynthesis protein TuaB (483 aa).

The next 11 membrane-spanning stretches (helical) occupy residues 15–34, 41–63, 83–105, 112–134, 154–176, 294–316, 321–343, 356–378, 382–404, 411–433, and 448–470; these read TSIS…ALLG, EFGL…DMGF, WLNI…VIAG, LVFL…QYQY, VLSF…YVIS, LALV…ITAV, WLAA…LMNP, LAFY…AVQT, LTVA…WLLA, LSAY…IIAF, and MRLA…KAYP.

It belongs to the polysaccharide synthase family.

The protein resides in the cell membrane. It participates in cell wall biogenesis; teichuronic acid biosynthesis. In terms of biological role, might be involved in the translocation of teichuronic acid repeating units from the inner to the outer surface of the membrane. The chain is Teichuronic acid biosynthesis protein TuaB (tuaB) from Bacillus subtilis (strain 168).